A 91-amino-acid chain; its full sequence is Small ribosomal subunit protein uS19m (91 aa).

The protein belongs to the universal ribosomal protein uS19 family. In terms of assembly, component of the mitochondrial small ribosomal subunit (mt-SSU). Mature yeast 74S mitochondrial ribosomes consist of a small (37S) and a large (54S) subunit. The 37S small subunit contains a 15S ribosomal RNA (15S mt-rRNA) and 34 different proteins. The 54S large subunit contains a 21S rRNA (21S mt-rRNA) and 46 different proteins.

The protein localises to the mitochondrion. In terms of biological role, component of the mitochondrial ribosome (mitoribosome), a dedicated translation machinery responsible for the synthesis of mitochondrial genome-encoded proteins, including at least some of the essential transmembrane subunits of the mitochondrial respiratory chain. The mitoribosomes are attached to the mitochondrial inner membrane and translation products are cotranslationally integrated into the membrane. This is Small ribosomal subunit protein uS19m (RSM19) from Saccharomyces cerevisiae (strain ATCC 204508 / S288c) (Baker's yeast).